Reading from the N-terminus, the 504-residue chain is D-alanine--D-alanyl carrier protein ligase (504 aa).

Residue 152–153 coordinates ATP; it reads TS. Aspartate 197 serves as a coordination point for D-alanine. 292-297 contacts ATP; that stretch reads NTYGPT. Valine 301 contacts D-alanine. Residues aspartate 383, 394–397, and lysine 492 contribute to the ATP site; that span reads YNGR. Lysine 492 provides a ligand contact to D-alanine.

This sequence belongs to the ATP-dependent AMP-binding enzyme family. DltA subfamily.

It localises to the cytoplasm. It catalyses the reaction holo-[D-alanyl-carrier protein] + D-alanine + ATP = D-alanyl-[D-alanyl-carrier protein] + AMP + diphosphate. It participates in cell wall biogenesis; lipoteichoic acid biosynthesis. Functionally, catalyzes the first step in the D-alanylation of lipoteichoic acid (LTA), the activation of D-alanine and its transfer onto the D-alanyl carrier protein (Dcp) DltC. In an ATP-dependent two-step reaction, forms a high energy D-alanyl-AMP intermediate, followed by transfer of the D-alanyl residue as a thiol ester to the phosphopantheinyl prosthetic group of the Dcp. D-alanylation of LTA plays an important role in modulating the properties of the cell wall in Gram-positive bacteria, influencing the net charge of the cell wall. This Bacillus cereus (strain G9842) protein is D-alanine--D-alanyl carrier protein ligase.